A 263-amino-acid polypeptide reads, in one-letter code: Phosphoinositide-3-kinase-interacting protein 1 (263 aa).

An N-terminal signal peptide occupies residues 1 to 21 (MLLAWVQAFLVSNMLLAEAYG). Over 22-168 (SGGCFWDNGH…NSKEKKDLGT (147 aa)) the chain is Extracellular. The Kringle domain occupies 24-101 (GCFWDNGHLY…EKRPCEDLRC (78 aa)). Intrachain disulfides connect C25–C101, C46–C82, and C70–C96. An O-linked (GalNAc...) serine glycan is attached at S39. N66 carries N-linked (GlcNAc...) (complex) asparagine glycosylation. The helical transmembrane segment at 169-189 (LGYVLGITMMVIIIAIGAGII) threads the bilayer. Residues 190–263 (LGYSYKRGKD…LMGQAGTPGA (74 aa)) lie on the Cytoplasmic side of the membrane. Positions 242-251 (QTPVDPQEGT) are enriched in polar residues. The segment at 242–263 (QTPVDPQEGTTPLMGQAGTPGA) is disordered.

Post-translationally, N- and O-glycosylated. O-glycosylated with core 1 or possibly core 8 glycans. N-glycan heterogeneity at Asn-66: dHex1Hex5HexNAc4 (major) and dHex1Hex6HexNAc5 (minor).

It is found in the cell membrane. Its function is as follows. Negative regulator of hepatic phosphatidylinositol 3-kinase (PI3K) activity. In Homo sapiens (Human), this protein is Phosphoinositide-3-kinase-interacting protein 1 (PIK3IP1).